The following is a 163-amino-acid chain: Nucleotide-binding protein PC1_1036 (163 aa).

This sequence belongs to the YajQ family.

In terms of biological role, nucleotide-binding protein. The chain is Nucleotide-binding protein PC1_1036 from Pectobacterium carotovorum subsp. carotovorum (strain PC1).